The chain runs to 477 residues: Beta-agarase D (477 aa).

A signal peptide spans Met-1–Gly-20. The GH16 domain occupies Tyr-22–Ala-378. Substrate-binding positions include Met-94 to Asn-104, Asn-123 to Thr-125, Glu-174, Glu-179, Arg-206, and Glu-340. Residue Glu-174 is the Nucleophile of the active site. The active-site Proton donor is the Glu-179. Positions Asn-382 to Glu-391 are enriched in low complexity. The interval Asn-382–Pro-402 is disordered.

This sequence belongs to the glycosyl hydrolase 16 family.

It localises to the secreted. The catalysed reaction is Hydrolysis of (1-&gt;4)-beta-D-galactosidic linkages in agarose, giving the tetramer as the predominant product.. Cleaves the beta-1,4-linkages between beta-D-galactose and alpha-L-3,6-anhydro-galactose residues in agarose. Cleaves agarose in a random manner with retention of the anomeric-bond configuration, producing beta-anomers that give rise progressively to alpha-anomers when mutarotation takes place. Requires at least 4 consecutive agarose units and is highly intolerant to modifications. In Zobellia galactanivorans (strain DSM 12802 / CCUG 47099 / CIP 106680 / NCIMB 13871 / Dsij), this protein is Beta-agarase D (agaD).